A 205-amino-acid polypeptide reads, in one-letter code: MDLKLLNDQGQAATFSAPDTIFGRDFNEALVHQIVVAFQANARSGNRAQKDRAEVKHSTKKPWRQKGTGRARAGMTSSPLWRGGGRAFPNSPEENFSQKVNKKMYRAGIRSILSQLAREDRVAVVDTFTLESPKTKLAAAKLKSLGLDSVLIITDNVDENVYLATRNLPHVAVVEPRYADPLSLIHYKKVLITKPAIAQLEEMLG.

Residues 43–95 (RSGNRAQKDRAEVKHSTKKPWRQKGTGRARAGMTSSPLWRGGGRAFPNSPEEN) form a disordered region. A compositionally biased stretch (basic and acidic residues) spans 48-57 (AQKDRAEVKH). Positions 58 to 69 (STKKPWRQKGTG) are enriched in basic residues.

It belongs to the universal ribosomal protein uL4 family. In terms of assembly, part of the 50S ribosomal subunit.

One of the primary rRNA binding proteins, this protein initially binds near the 5'-end of the 23S rRNA. It is important during the early stages of 50S assembly. It makes multiple contacts with different domains of the 23S rRNA in the assembled 50S subunit and ribosome. In terms of biological role, forms part of the polypeptide exit tunnel. In Bordetella bronchiseptica (strain ATCC BAA-588 / NCTC 13252 / RB50) (Alcaligenes bronchisepticus), this protein is Large ribosomal subunit protein uL4.